Consider the following 349-residue polypeptide: Methylthioribose-1-phosphate isomerase (349 aa).

Residues Arg-49–Ala-51, Arg-93, and Gln-201 contribute to the substrate site. The active-site Proton donor is Asp-242. Substrate is bound at residue Asn-252–Lys-253.

It belongs to the EIF-2B alpha/beta/delta subunits family. MtnA subfamily.

It catalyses the reaction 5-(methylsulfanyl)-alpha-D-ribose 1-phosphate = 5-(methylsulfanyl)-D-ribulose 1-phosphate. The protein operates within amino-acid biosynthesis; L-methionine biosynthesis via salvage pathway; L-methionine from S-methyl-5-thio-alpha-D-ribose 1-phosphate: step 1/6. Functionally, catalyzes the interconversion of methylthioribose-1-phosphate (MTR-1-P) into methylthioribulose-1-phosphate (MTRu-1-P). This chain is Methylthioribose-1-phosphate isomerase, found in Petrotoga mobilis (strain DSM 10674 / SJ95).